The following is a 143-amino-acid chain: Photosystem I reaction center subunit IV B, chloroplastic (143 aa).

A chloroplast-targeting transit peptide spans 1–51; sequence MASSSMASAASGFMVATPNIATSNTAPRTSMLFFSSSKNNTTTNFPRLVVR. The segment covering 56 to 75 has biased composition (low complexity); it reads AAPPAATATAEGEAPPAKAA. A disordered region spans residues 56–86; the sequence is AAPPAATATAEGEAPPAKAAKPPPIGPKRGT.

Belongs to the PsaE family. In terms of processing, 2 isoforms exists (ratio 1:1). With or without the N-terminal alanine.

It is found in the plastid. Its subcellular location is the chloroplast thylakoid membrane. Its function is as follows. Stabilizes the interaction between PsaC and the PSI core, assists the docking of the ferredoxin to PSI and interacts with ferredoxin-NADP oxidoreductase. The sequence is that of Photosystem I reaction center subunit IV B, chloroplastic (PSAEB) from Nicotiana sylvestris (Wood tobacco).